A 419-amino-acid chain; its full sequence is eIF5-mimic protein 2-A (419 aa).

Residues M1–R15 show a composition bias toward polar residues. A disordered region spans residues M1–P29. The 168-residue stretch at N247–E414 folds into the W2 domain.

This sequence belongs to the BZW family.

Translation initiation regulator which may repress repeat-associated non-AUG (RAN) initiated translation probably by acting as a competitive inhibitor of eukaryotic translation initiation factor 5 (EIF5) function. Enhances histone H4 gene transcription but does not seem to bind DNA directly. The protein is eIF5-mimic protein 2-A (bzw1a) of Danio rerio (Zebrafish).